The following is a 310-amino-acid chain: Acetylglutamate kinase (310 aa).

Substrate is bound by residues 70 to 71, arginine 92, and asparagine 191; that span reads GG.

This sequence belongs to the acetylglutamate kinase family. ArgB subfamily.

It is found in the cytoplasm. The catalysed reaction is N-acetyl-L-glutamate + ATP = N-acetyl-L-glutamyl 5-phosphate + ADP. It participates in amino-acid biosynthesis; L-arginine biosynthesis; N(2)-acetyl-L-ornithine from L-glutamate: step 2/4. Its function is as follows. Catalyzes the ATP-dependent phosphorylation of N-acetyl-L-glutamate. The polypeptide is Acetylglutamate kinase (Corynebacterium diphtheriae (strain ATCC 700971 / NCTC 13129 / Biotype gravis)).